Here is a 182-residue protein sequence, read N- to C-terminus: Probable RNA 2'-phosphotransferase (182 aa).

Belongs to the KptA/TPT1 family.

Functionally, removes the 2'-phosphate from RNA via an intermediate in which the phosphate is ADP-ribosylated by NAD followed by a presumed transesterification to release the RNA and generate ADP-ribose 1''-2''-cyclic phosphate (APPR&gt;P). May function as an ADP-ribosylase. This chain is Probable RNA 2'-phosphotransferase, found in Pseudomonas paraeruginosa (strain DSM 24068 / PA7) (Pseudomonas aeruginosa (strain PA7)).